Consider the following 250-residue polypeptide: 2,3-bisphosphoglycerate-dependent phosphoglycerate mutase (250 aa).

Residues 12–19 (RHGQSAWN), 25–26 (TG), arginine 64, 91–94 (ERHY), lysine 102, 118–119 (RR), and 185–186 (GN) each bind substrate. Histidine 13 functions as the Tele-phosphohistidine intermediate in the catalytic mechanism. Catalysis depends on glutamate 91, which acts as the Proton donor/acceptor.

The protein belongs to the phosphoglycerate mutase family. BPG-dependent PGAM subfamily.

It carries out the reaction (2R)-2-phosphoglycerate = (2R)-3-phosphoglycerate. It functions in the pathway carbohydrate degradation; glycolysis; pyruvate from D-glyceraldehyde 3-phosphate: step 3/5. Its function is as follows. Catalyzes the interconversion of 2-phosphoglycerate and 3-phosphoglycerate. The chain is 2,3-bisphosphoglycerate-dependent phosphoglycerate mutase from Corynebacterium efficiens (strain DSM 44549 / YS-314 / AJ 12310 / JCM 11189 / NBRC 100395).